Here is a 62-residue protein sequence, read N- to C-terminus: MGMRMMFTVFLLVVLATAVLPVTLDRASDGRNAAANAKTPRLIAPFIRDYCCHRGPCMVWCG.

An N-terminal signal peptide occupies residues 1–18 (MGMRMMFTVFLLVVLATA). The propeptide occupies 19-48 (VLPVTLDRASDGRNAAANAKTPRLIAPFIR). 2 disulfides stabilise this stretch: Cys-51–Cys-57 and Cys-52–Cys-61. Cys-61 carries the post-translational modification Cysteine amide.

It belongs to the conotoxin A superfamily. Expressed by the venom duct.

The protein resides in the secreted. Its function is as follows. Does not show activity on the acetylcholine receptors tested. The polypeptide is Alpha-conotoxin-like Bn1.3 (Conus bandanus (Banded marble cone)).